A 439-amino-acid chain; its full sequence is Sodium-dependent phosphate transport protein 3 (439 aa).

N-linked (GlcNAc...) asparagine glycans are attached at residues asparagine 47, asparagine 56, asparagine 68, and asparagine 69. The next 9 helical transmembrane spans lie at 98–118 (INYG…IFGA), 130–150 (SLLT…VIMV), 183–203 (TIAG…GGLI), 211–231 (FIFY…FTVI), 273–293 (LPLW…TIIL), 317–337 (LPFI…DFLL), 350–369 (LFSS…LPFV), 374–396 (VITI…GFII), and 415–435 (GFGL…ISQV).

This sequence belongs to the major facilitator superfamily. Sodium/anion cotransporter family. Expressed in the small intestine, kidney, spleen and testis. Not detected in fetal brain, bone marrow, and mammary gland.

It is found in the apical cell membrane. The catalysed reaction is 3 Na(+)(out) + phosphate(out) = 3 Na(+)(in) + phosphate(in). It catalyses the reaction urate(out) + n chloride(in) = urate(in) + n chloride(out). Its function is as follows. Acts as a membrane potential-dependent organic anion transporter, the transport requires a low concentration of chloride ions. Mediates chloride-dependent transport of urate. Can actively transport inorganic phosphate into cells via Na(+) cotransport. The chain is Sodium-dependent phosphate transport protein 3 (SLC17A2) from Homo sapiens (Human).